The sequence spans 498 residues: Diacylglycerol O-acyltransferase 1A (498 aa).

Positions 1 to 67 are disordered; sequence MAISDEPETV…ANSQPQQKQD (67 aa). 7 helical membrane passes run 102–122, 146–166, 178–198, 203–223, 253–273, 295–315, and 342–362; these read HAGLFNLCIVVLVAVNSRLII, WPLFMCCLSLVVFPFAAFIVE, VVVVLHIIITSASLFYPVLVI, SAFLSGVTLMLFACVVWLKLV, YPYNVSFKSLAYFLVAPTLCY, LIIFTGVMGFIIEQYINPIVQ, and VWLCMFYCFFHLWLNILAELL. An FYXDWWN motif motif is present at residues 369–375; sequence FYQDWWN. Helical transmembrane passes span 410 to 430, 432 to 452, and 465 to 485; these read AVALLIAFLVSALFHELCIAV, CHIFKLWAFGGIMFQVPLVFI, and VGNMIFWFIFSILGQPMCVLL. His-424 is an active-site residue.

The protein belongs to the membrane-bound acyltransferase family. Sterol o-acyltransferase subfamily. In terms of tissue distribution, highly expressed in flowers and pods. Expressed at low levels in roots, stems and leaves.

The protein resides in the endoplasmic reticulum membrane. It catalyses the reaction an acyl-CoA + a 1,2-diacyl-sn-glycerol = a triacyl-sn-glycerol + CoA. Its pathway is glycerolipid metabolism; triacylglycerol biosynthesis. In terms of biological role, major contributor to triacylglycerol (TAG) synthesis and oil accumulation in developing seeds. Catalyzes the acylation of the sn-3 hydroxy group of sn-1,2-diacylglycerol using acyl-CoA. Has a marked preference for oleoyl-CoA (18:1) and sn-1,2-dioleoylglycerol over vernoloyl-CoA and sn-1,2-divernoloylglycerol. Can use oleoyl-CoA, linoleoyl-CoA and linolenoyl-CoA as substrates. In Glycine max (Soybean), this protein is Diacylglycerol O-acyltransferase 1A.